A 231-amino-acid chain; its full sequence is TATA-box-binding protein (231 aa).

A run of 2 repeats spans residues 58 to 134 and 148 to 225.

It belongs to the TBP family. As to quaternary structure, belongs to the TFIID complex together with the TBP-associated factors (TAFs). Binds DNA as monomer.

It localises to the nucleus. Functionally, general transcription factor that functions at the core of the DNA-binding multiprotein factor TFIID. Binding of TFIID to the TATA box is the initial transcriptional step of the pre-initiation complex (PIC), playing a role in the activation of eukaryotic genes transcribed by RNA polymerase II. The chain is TATA-box-binding protein (tbp1) from Schizosaccharomyces pombe (strain 972 / ATCC 24843) (Fission yeast).